Reading from the N-terminus, the 134-residue chain is Profilin-3 (134 aa).

Cysteine 13 and cysteine 118 are oxidised to a cystine. The Involved in PIP2 interaction motif lies at 84 to 100; that stretch reads AVIRGKKGSGGITIKKT. A Phosphothreonine modification is found at threonine 114.

The protein belongs to the profilin family. In terms of assembly, occurs in many kinds of cells as a complex with monomeric actin in a 1:1 ratio. Post-translationally, phosphorylated by MAP kinases.

It localises to the cytoplasm. The protein resides in the cytoskeleton. In terms of biological role, binds to actin and affects the structure of the cytoskeleton. At high concentrations, profilin prevents the polymerization of actin, whereas it enhances it at low concentrations. This Olea europaea (Common olive) protein is Profilin-3.